The chain runs to 246 residues: Phycocyanobilin:ferredoxin oxidoreductase (246 aa).

Belongs to the HY2 family.

It carries out the reaction (2R,3Z)-phycocyanobilin + 4 oxidized [2Fe-2S]-[ferredoxin] = biliverdin IXalpha + 4 reduced [2Fe-2S]-[ferredoxin] + 4 H(+). In terms of biological role, catalyzes the four-electron reduction of biliverdin IX-alpha (2-electron reduction at both the A and D rings); the reaction proceeds via an isolatable 2-electron intermediate, 181,182-dihydrobiliverdin. This is Phycocyanobilin:ferredoxin oxidoreductase from Crocosphaera subtropica (strain ATCC 51142 / BH68) (Cyanothece sp. (strain ATCC 51142)).